A 737-amino-acid chain; its full sequence is Polyribonucleotide nucleotidyltransferase (737 aa).

Positions 489 and 495 each coordinate Mg(2+). Residues 556–615 (PKIDTIKIDVDKIKIVIGKGGETIDKIIAETGVKIDIDEEGNVSIYSSDQDAINRAKEII) enclose the KH domain. In terms of domain architecture, S1 motif spans 625–693 (DEVYRAKVVR…EKGRIDASMK (69 aa)). The segment at 691–737 (SMKALLPRPPKPEHDEKGEKSERPHRPRHQKDHKPKKEFTETPKDSE) is disordered. Residues 700–714 (PKPEHDEKGEKSERP) are compositionally biased toward basic and acidic residues. A compositionally biased stretch (basic residues) spans 715-724 (HRPRHQKDHK). Positions 725–737 (PKKEFTETPKDSE) are enriched in basic and acidic residues.

Belongs to the polyribonucleotide nucleotidyltransferase family. Requires Mg(2+) as cofactor.

Its subcellular location is the cytoplasm. The catalysed reaction is RNA(n+1) + phosphate = RNA(n) + a ribonucleoside 5'-diphosphate. Its function is as follows. Involved in mRNA degradation. Catalyzes the phosphorolysis of single-stranded polyribonucleotides processively in the 3'- to 5'-direction. In Streptococcus pneumoniae (strain JJA), this protein is Polyribonucleotide nucleotidyltransferase.